Consider the following 68-residue polypeptide: uncharacterized protein (68 aa).

This is an uncharacterized protein from Orgyia pseudotsugata (Douglas-fir tussock moth).